Here is a 248-residue protein sequence, read N- to C-terminus: Undecaprenyl-diphosphatase (248 aa).

The next 8 membrane-spanning stretches (helical) occupy residues 4 to 24 (IVLG…SGHL), 40 to 60 (FAFL…KEIV), 74 to 94 (YSLV…GFLF), 101 to 121 (SFSN…SLFV), 134 to 154 (ISYI…FPGI), 174 to 194 (ALKY…ILET), 201 to 221 (SYIL…LLIL), and 228 to 248 (KKLK…FFVG).

Belongs to the UppP family.

Its subcellular location is the cell inner membrane. The catalysed reaction is di-trans,octa-cis-undecaprenyl diphosphate + H2O = di-trans,octa-cis-undecaprenyl phosphate + phosphate + H(+). Catalyzes the dephosphorylation of undecaprenyl diphosphate (UPP). Confers resistance to bacitracin. The sequence is that of Undecaprenyl-diphosphatase from Thermosipho africanus (strain TCF52B).